The chain runs to 379 residues: 3-dehydroquinate synthase (379 aa).

Residues 67–72, 101–105, 125–126, Lys-138, and Lys-147 contribute to the NAD(+) site; these read PGEKNK, GIVLD, and TT. Zn(2+) contacts are provided by Glu-180, His-242, and His-258.

This sequence belongs to the sugar phosphate cyclases superfamily. Dehydroquinate synthase family. NAD(+) serves as cofactor. Requires Co(2+) as cofactor. Zn(2+) is required as a cofactor.

It is found in the cytoplasm. The enzyme catalyses 7-phospho-2-dehydro-3-deoxy-D-arabino-heptonate = 3-dehydroquinate + phosphate. It participates in metabolic intermediate biosynthesis; chorismate biosynthesis; chorismate from D-erythrose 4-phosphate and phosphoenolpyruvate: step 2/7. Catalyzes the conversion of 3-deoxy-D-arabino-heptulosonate 7-phosphate (DAHP) to dehydroquinate (DHQ). This chain is 3-dehydroquinate synthase, found in Chlamydia felis (strain Fe/C-56) (Chlamydophila felis).